Consider the following 155-residue polypeptide: Deoxyuridine 5'-triphosphate nucleotidohydrolase (155 aa).

Residues 74–76 (RSG), Asn87, and 91–93 (TID) each bind substrate.

This sequence belongs to the dUTPase family. The cofactor is Mg(2+).

It catalyses the reaction dUTP + H2O = dUMP + diphosphate + H(+). The protein operates within pyrimidine metabolism; dUMP biosynthesis; dUMP from dCTP (dUTP route): step 2/2. Its function is as follows. This enzyme is involved in nucleotide metabolism: it produces dUMP, the immediate precursor of thymidine nucleotides and it decreases the intracellular concentration of dUTP so that uracil cannot be incorporated into DNA. In Dinoroseobacter shibae (strain DSM 16493 / NCIMB 14021 / DFL 12), this protein is Deoxyuridine 5'-triphosphate nucleotidohydrolase.